A 264-amino-acid polypeptide reads, in one-letter code: Short chain dehydrogenase/reductase nsrJ (264 aa).

NADP(+) contacts are provided by I24, D70, N97, and R130. Residues S146 and S147 each act as proton donor in the active site. NADP(+) contacts are provided by Y161, K165, and T196. Y161 acts as the Proton acceptor in catalysis. Residue K165 is the Lowers pKa of active site Tyr of the active site.

It belongs to the short-chain dehydrogenases/reductases (SDR) family.

It participates in secondary metabolite biosynthesis. Functionally, short chain dehydrogenase/reductase; part of the gene cluster that mediates the biosynthesis of the tetrahydroxanthone dimer neosartorin, which exhibits antibacterial activity. The two different monomeric units appear to be synthesized by the same set of enzymes, among which the Baeyer-Villiger monooxygenase nsrF is the key enzyme for the divergence of the biosynthetic routes. The pathway begins with the synthesis of atrochrysone thioester by the polyketide synthase nsrB. The atrochrysone carboxyl ACP thioesterase nsrC then breaks the thioester bond and releases the atrochrysone carboxylic acid from AacuL. Atrochrysone carboxylic acid is decarboxylated by the decarboxylase nsrE, and oxidized by the anthrone oxygenase nsrD to yield emodin. Emodin is then reduced to emodin hydroquinone by the oxidoreductase nsrR. A-ring reduction by the short chain dehydrogenase nsrJ, dehydration by the scytalone dehydratase-like protein nsrI and probable spontaneous re-oxidation, results in overall deoxygenation to chrysophanol. The Baeyer-Villiger monooxygenase nsrF accepts chrysophanol as a substrate to insert one oxygen atom at two different positions to yield the precursors of both monomric units. NsrF is promiscuous/flexible in interacting with the 2 (non methylated and methylated) aromatic rings of chrysophanol, thus diverging the biosynthetic pathway at this point. After the hydrolysis of the lactones, methylesterification by the methyltransferase nsrG yields respectively moniliphenone and 2,2',6'-trihydroxy-4-methyl-6-methoxya-cyldiphenylmethanone. The next steps are the hydroxylation by the FAD-dependent monooxygenase nsrK, followed by isomerization by the monooxygenase nsrQ. The short chain dehydrogenase/reductase nsrO then catalyzes the C-5 ketoreduction to give the xanthone skeleton of blennolide C and 5-acetylblennolide A. The acetyltransferase nsrL has a strict substrate specificity and uses only blennolide A but not blennolide C to yield 5-acetylblennolide A as the single-acetylated product. In the final step of the biosynthesis, the heterodimerization of the 2 xanthones, blennolide C and 5-acetylblennolide A, is catalyzed by the cytochrome P450 monooxygenase nsrP. NsrP can utilize at least three different xanthones as its substrates to perform the dimerization reaction. This Aspergillus novofumigatus (strain IBT 16806) protein is Short chain dehydrogenase/reductase nsrJ.